Here is an 84-residue protein sequence, read N- to C-terminus: Large ribosomal subunit protein bL27 (84 aa).

The segment at 1–22 is disordered; it reads MAHKKAGGSTRNGRDSESKRLG.

It belongs to the bacterial ribosomal protein bL27 family.

In Shewanella baltica (strain OS223), this protein is Large ribosomal subunit protein bL27.